We begin with the raw amino-acid sequence, 760 residues long: Golgin subfamily A member 5 (760 aa).

Residues 1-727 (MSWFVDLAGK…IFLRRYPMAR (727 aa)) lie on the Cytoplasmic side of the membrane. Positions 95-111 (VSSTTPLGSSSKASSNF) are enriched in polar residues. 3 disordered regions span residues 95 to 114 (VSST…FVRP), 126 to 216 (DFLN…SQAD), and 432 to 456 (TEEK…EYTK). Positions 135–146 (QSEKKEVRRETV) are enriched in basic and acidic residues. Residues 148–166 (KAFSPTGVSAQSQMPTVSL) are compositionally biased toward polar residues. Residues 174-201 (PSVTPTPSSTQGLSRNSSLGSLSSSSHS) show a composition bias toward low complexity. The stretch at 249 to 668 (QGQEHVISNL…LQGGQNSASH (420 aa)) forms a coiled coil. Over residues 441–450 (LQQQAKSSRS) the composition is skewed to polar residues. Residues 728–748 (VFVIIYMALLHLWVMIVLLTY) form a helical; Anchor for type IV membrane protein membrane-spanning segment. The Extracellular segment spans residues 749-760 (TPEMHHSHPDGR).

The protein localises to the golgi apparatus membrane. Involved in maintaining Golgi structure. Stimulates the formation of Golgi stacks and ribbons. Involved in intra-Golgi retrograde transport. This is Golgin subfamily A member 5 (golga5) from Danio rerio (Zebrafish).